The chain runs to 199 residues: Extracellular superoxide dismutase [Cu-Zn] (199 aa).

Positions 1 to 20 (MMIASFAIFLSHIIFITYAT) are cleaved as a signal peptide. Residues Asn-33, Asn-60, and Asn-70 are each glycosylated (N-linked (GlcNAc...) asparagine). Cu cation-binding residues include His-89, His-91, and His-106. Cysteines 100 and 192 form a disulfide. Position 106 (His-106) interacts with Zn(2+). N-linked (GlcNAc...) asparagine glycosylation occurs at Asn-111. His-114, His-123, and Asp-126 together coordinate Zn(2+). Residue His-163 participates in Cu cation binding.

It belongs to the Cu-Zn superoxide dismutase family. Homodimer. Cu cation serves as cofactor. It depends on Zn(2+) as a cofactor.

Its subcellular location is the secreted. It localises to the extracellular space. It catalyses the reaction 2 superoxide + 2 H(+) = H2O2 + O2. Functionally, protect the extracellular space from toxic effect of reactive oxygen intermediates by converting superoxide radicals into hydrogen peroxide and oxygen. May act in the parasite defense by neutralizing superoxide generated by activated leukocytes, thus acting as both an antioxidant and an anti-inflammatory factor. This is Extracellular superoxide dismutase [Cu-Zn] from Brugia pahangi (Filarial nematode worm).